We begin with the raw amino-acid sequence, 120 residues long: Ribosome-binding factor A (120 aa).

Belongs to the RbfA family. In terms of assembly, monomer. Binds 30S ribosomal subunits, but not 50S ribosomal subunits or 70S ribosomes.

The protein localises to the cytoplasm. Functionally, one of several proteins that assist in the late maturation steps of the functional core of the 30S ribosomal subunit. Associates with free 30S ribosomal subunits (but not with 30S subunits that are part of 70S ribosomes or polysomes). Required for efficient processing of 16S rRNA. May interact with the 5'-terminal helix region of 16S rRNA. The sequence is that of Ribosome-binding factor A from Clostridium botulinum (strain 657 / Type Ba4).